The sequence spans 80 residues: Omega-conotoxin-like PuIA (80 aa).

The first 22 residues, 1–22 (MKLTCVMIVAVLFLTAWTFVTA), serve as a signal peptide directing secretion. Positions 23–50 (DSIRALEDLFAKAPDEMENSGASPLNER) are excised as a propeptide. 3 disulfides stabilise this stretch: C52-C70, C59-C74, and C69-C78.

The protein belongs to the conotoxin O1 superfamily. As to expression, expressed by the venom duct.

The protein resides in the secreted. In terms of biological role, omega-conotoxins act at presynaptic membranes, they bind and block voltage-gated calcium channels (Cav). This Conus pulicarius (Flea-bitten cone) protein is Omega-conotoxin-like PuIA.